The sequence spans 75 residues: MKKSAAVVAGAIMALGMAAPAFADAGAEGAAVGSPGVLSGNVIQVPVHVPVNVCGNSINVVGLLNPAFGNKCEND.

The first 23 residues, 1-23 (MKKSAAVVAGAIMALGMAAPAFA), serve as a signal peptide directing secretion. Positions 34–74 (SPGVLSGNVIQVPVHVPVNVCGNSINVVGLLNPAFGNKCEN) constitute a Chaplin domain. Cysteine 54 and cysteine 72 are disulfide-bonded.

This sequence belongs to the chaplin family. Short chaplin subfamily.

It localises to the cell surface. Its subcellular location is the secreted. The protein resides in the cell wall. It is found in the fimbrium. Its function is as follows. One of 8 partially redundant surface-active proteins required for efficient formation of aerial mycelium; the short chaplins assemble into a hydrophobic, amyloidal fibrillar surface layer that envelopes and protects aerial hyphae and spores, presumably anchored to the long chaplins. Chaplins have an overlapping function with the surface-active SapB peptide; chaplins are essential on minimal medium while on rich medium both chaplins and SapB are required for efficient aerial hyphae formation. Chaplins are also involved in cell attachment to a hydrophobic surface. Forms amyloid fibrils in vitro probably composed of stacked beta-sheets, at low extracellular concentrations individually restores the ability to form aerial hyphae to a chaplin-deficient strain. A small chaplin extract (ChpD, ChpE, ChpF, ChpG and ChpH) self-assembles into 2 different amyloids; small fibrils at the air-water interface form an amphipathic membrane that resembles spore-surface structures involved in aerial hyphae formation, and hydrophilic fibrils in solution that resemble the fibers that attach cells to a hydrophobic surface. At the air-water interface the hydrophilic surface is in contact with water (probably equivalent to the peptidoglycan layer), while the hydrophobic face is exposed to the air, making the surface of the aerial hyphae hydrophobic. A minimal chaplin strain capable of forming aerial mycelium/hyphae on minimal medium contains ChpC, ChpE and ChpH. The strain also has restored rodlet formation on the hyphae surface. A second minimal chaplin strain with ChpA, ChpD and ChpE makes slightly less robust hyphae. A small chaplin extract applied to a chaplin-deficient strain restores aerial hyphae formation. The small chaplin extract forms an amyloid-like structure similar to that seen on the surface of cells without rodlets (rdlA-rdlB deletions), and is highly surface active, reducing surface tension from 72 to 26 mJ/m(2), which probably allows escape of hyphae from an aqueous environment into air. The polypeptide is Chaplin-D (Streptomyces coelicolor (strain ATCC BAA-471 / A3(2) / M145)).